The sequence spans 399 residues: Protein IQ-DOMAIN 25 (399 aa).

The short motif at 1 to 8 (MRKNLTKL) is the Nuclear localization signal element. 2 calmodulin-binding regions span residues 81-91 (KERRTHAIAVA) and 99-110 (DAAVAAAKAAAA). IQ domains are found at residues 130-158 (EHRA…GVVK) and 159-181 (IQAL…SMEA). Disordered regions lie at residues 198–219 (NGNA…ENRN), 262–302 (SPLS…SPAR), and 346–377 (LRSH…VRMQ). The span at 285–294 (KFPTAQSTPR) shows a compositional bias: polar residues.

The protein belongs to the IQD family. As to quaternary structure, binds to multiple calmodulin (CaM) in the presence of Ca(2+) and CaM-like proteins.

The protein localises to the nucleus. It is found in the cell membrane. May be involved in cooperative interactions with calmodulins or calmodulin-like proteins. Recruits calmodulin proteins to microtubules, thus being a potential scaffold in cellular signaling and trafficking. May associate with nucleic acids and regulate gene expression at the transcriptional or post-transcriptional level. In Arabidopsis thaliana (Mouse-ear cress), this protein is Protein IQ-DOMAIN 25.